The sequence spans 91 residues: Putative septation protein SpoVG (91 aa).

It belongs to the SpoVG family.

Its function is as follows. Could be involved in septation. This chain is Putative septation protein SpoVG, found in Caldanaerobacter subterraneus subsp. tengcongensis (strain DSM 15242 / JCM 11007 / NBRC 100824 / MB4) (Thermoanaerobacter tengcongensis).